A 301-amino-acid polypeptide reads, in one-letter code: MDLSELERDNTGRCRLSSPVPAVCLKEPCVLGVDEAGRGPVLGPMVYAICYCPLSRLADLEALKVADSKTLTENERERLFAKMEEDGDFVGWALDVLSPNLISTSMLGRVKYNLNSLSHDTAAGLIQYALDQNVNVTQVFVDTVGMPETYQARLQQHFPGIEVTVKAKADSLFPVVSAASIFAKVARDKAVKNWQFVENLQDLDSDYGSGYPNDPKTKAWLRKHVDPVFGFPQFVRFSWSTAQAILEKEAEDVIWEDSEAEEDPERPGKITSYFSQGPQTCRPQAPHRYFQERGLEAASSL.

M1 carries the post-translational modification N-acetylmethionine. An RNase H type-2 domain is found at 28–251; sequence PCVLGVDEAG…AQAILEKEAE (224 aa). Residues D34, E35, and D142 each contribute to the a divalent metal cation site. T217 carries the post-translational modification Phosphothreonine. A compositionally biased stretch (acidic residues) spans 255–264; the sequence is WEDSEAEEDP. A disordered region spans residues 255-284; that stretch reads WEDSEAEEDPERPGKITSYFSQGPQTCRPQ. S258 bears the Phosphoserine mark. Residues 272–282 show a composition bias toward polar residues; it reads SYFSQGPQTCR.

Belongs to the RNase HII family. Eukaryotic subfamily. In terms of assembly, the RNase H2 complex is a heterotrimer composed of the catalytic subunit RNASEH2A and the non-catalytic subunits RNASEH2B and RNASEH2C. It depends on Mn(2+) as a cofactor. Requires Mg(2+) as cofactor.

It localises to the nucleus. It catalyses the reaction Endonucleolytic cleavage to 5'-phosphomonoester.. Functionally, catalytic subunit of RNase HII, an endonuclease that specifically degrades the RNA of RNA:DNA hybrids. Participates in DNA replication, possibly by mediating the removal of lagging-strand Okazaki fragment RNA primers during DNA replication. Mediates the excision of single ribonucleotides from DNA:RNA duplexes. The sequence is that of Ribonuclease H2 subunit A (Rnaseh2a) from Mus musculus (Mouse).